We begin with the raw amino-acid sequence, 220 residues long: Fructose-6-phosphate aldolase (220 aa).

Lys85 functions as the Schiff-base intermediate with substrate in the catalytic mechanism.

This sequence belongs to the transaldolase family. Type 3A subfamily. As to quaternary structure, homodecamer.

Its subcellular location is the cytoplasm. It catalyses the reaction beta-D-fructose 6-phosphate = dihydroxyacetone + D-glyceraldehyde 3-phosphate. In terms of biological role, catalyzes the reversible formation of fructose 6-phosphate from dihydroxyacetone and D-glyceraldehyde 3-phosphate via an aldolization reaction. This Enterobacter sp. (strain 638) protein is Fructose-6-phosphate aldolase.